The following is a 310-amino-acid chain: MKPKIFIDGEHGTTGLQIRTRLAERDDLEVISIPEAERRNKDLRADYLRAADIAILCLPDDASKEAVSLLEGHNSTRIIDTSTAHRVHPDWAYGFAELAKGQRERIAEARLVANPGCYPTGAIALVRPLRDAGLLPADYPVSVNAVSGYTGGGKQLIAQMEDRNHPDYLAANNFLYGLPLKHKHVPELQLHGRLDRRPIFSPSVGRFPQGMIVQVPLFLSELEGSPSLAKVHAVLTEHYAGQDIVEVVPLEESAKLPRVDAEELAGKDGMKLFVFGTEDHGQVNLVALLDNLGKGASGAAVQNMNLMLGK.

Cys117 is an active-site residue.

It belongs to the NAGSA dehydrogenase family. Type 2 subfamily.

The protein localises to the cytoplasm. It catalyses the reaction N-acetyl-L-glutamate 5-semialdehyde + phosphate + NADP(+) = N-acetyl-L-glutamyl 5-phosphate + NADPH + H(+). Its pathway is amino-acid biosynthesis; L-arginine biosynthesis; N(2)-acetyl-L-ornithine from L-glutamate: step 3/4. Functionally, catalyzes the NADPH-dependent reduction of N-acetyl-5-glutamyl phosphate to yield N-acetyl-L-glutamate 5-semialdehyde. The chain is N-acetyl-gamma-glutamyl-phosphate reductase from Brucella abortus (strain S19).